Reading from the N-terminus, the 142-residue chain is Large ribosomal subunit protein uL13 (142 aa).

This sequence belongs to the universal ribosomal protein uL13 family. As to quaternary structure, part of the 50S ribosomal subunit.

Functionally, this protein is one of the early assembly proteins of the 50S ribosomal subunit, although it is not seen to bind rRNA by itself. It is important during the early stages of 50S assembly. The protein is Large ribosomal subunit protein uL13 of Teredinibacter turnerae (strain ATCC 39867 / T7901).